A 110-amino-acid chain; its full sequence is U1-lycotoxin-Ls1ii (110 aa).

Residues 1 to 20 form the signal peptide; it reads MKFVLLFGVLLVTLFSYSSA. A propeptide spanning residues 21-44 is cleaved from the precursor; the sequence is EMLDDFDQADEDELLSLIEKEEAR. 4 disulfide bridges follow: Cys-47–Cys-62, Cys-54–Cys-71, Cys-61–Cys-89, and Cys-73–Cys-87.

The protein belongs to the neurotoxin 19 (CSTX) family. 03 subfamily. As to expression, expressed by the venom gland.

The protein resides in the secreted. This Lycosa singoriensis (Wolf spider) protein is U1-lycotoxin-Ls1ii.